The following is a 156-amino-acid chain: Small ribosomal subunit protein uS7 (156 aa).

The protein belongs to the universal ribosomal protein uS7 family. Part of the 30S ribosomal subunit. Contacts proteins S9 and S11.

Functionally, one of the primary rRNA binding proteins, it binds directly to 16S rRNA where it nucleates assembly of the head domain of the 30S subunit. Is located at the subunit interface close to the decoding center, probably blocks exit of the E-site tRNA. The polypeptide is Small ribosomal subunit protein uS7 (Polynucleobacter necessarius subsp. necessarius (strain STIR1)).